We begin with the raw amino-acid sequence, 461 residues long: L-cystine uptake protein TcyP (461 aa).

10 helical membrane-spanning segments follow: residues 1–21 (MTLF…LLYM), 33–53 (VFTA…IYGS), 72–92 (YVKL…LGAF), 104–124 (ISGL…AVGI), 183–203 (PTST…YLGV), 224–244 (IIMR…LAIM), 262–282 (FVIA…LLIT), 337–357 (LSIG…IMIA), 369–389 (FLFT…GVGG), and 393–413 (FAAL…GLLI).

The protein belongs to the dicarboxylate/amino acid:cation symporter (DAACS) (TC 2.A.23) family.

Its subcellular location is the membrane. Mediates uptake of L-cystine, the oxidized form of L-cysteine. The chain is L-cystine uptake protein TcyP (tcyP) from Bacillus licheniformis (strain ATCC 14580 / DSM 13 / JCM 2505 / CCUG 7422 / NBRC 12200 / NCIMB 9375 / NCTC 10341 / NRRL NRS-1264 / Gibson 46).